We begin with the raw amino-acid sequence, 174 residues long: UPF0316 protein LMOf2365_1801 (174 aa).

The next 3 helical transmembrane spans lie at 4-24, 36-56, and 62-82; these read GIFI…IYTV, LAAL…SLVL, and IANV…GMKI.

This sequence belongs to the UPF0316 family.

The protein resides in the cell membrane. This Listeria monocytogenes serotype 4b (strain F2365) protein is UPF0316 protein LMOf2365_1801.